The sequence spans 338 residues: DNA-directed RNA polymerase subunit alpha (338 aa).

The alpha N-terminal domain (alpha-NTD) stretch occupies residues 1–225; sequence MLISQRPTIT…ELFGLARELN (225 aa). Residues 242–338 are alpha C-terminal domain (alpha-CTD); it reads YIAAYSMPIE…YIDVEAEDSE (97 aa). Residues 319–338 form a disordered region; sequence LEGYDAETGGYIDVEAEDSE.

Belongs to the RNA polymerase alpha chain family. Homodimer. The RNAP catalytic core consists of 2 alpha, 1 beta, 1 beta' and 1 omega subunit. When a sigma factor is associated with the core the holoenzyme is formed, which can initiate transcription.

It catalyses the reaction RNA(n) + a ribonucleoside 5'-triphosphate = RNA(n+1) + diphosphate. Functionally, DNA-dependent RNA polymerase catalyzes the transcription of DNA into RNA using the four ribonucleoside triphosphates as substrates. The polypeptide is DNA-directed RNA polymerase subunit alpha (Corynebacterium glutamicum (strain ATCC 13032 / DSM 20300 / JCM 1318 / BCRC 11384 / CCUG 27702 / LMG 3730 / NBRC 12168 / NCIMB 10025 / NRRL B-2784 / 534)).